Reading from the N-terminus, the 561-residue chain is Oxygen-dependent choline dehydrogenase (561 aa).

Asp-7–Glu-36 is a binding site for FAD. His-474 (proton acceptor) is an active-site residue.

Belongs to the GMC oxidoreductase family. FAD is required as a cofactor.

It catalyses the reaction choline + A = betaine aldehyde + AH2. The enzyme catalyses betaine aldehyde + NAD(+) + H2O = glycine betaine + NADH + 2 H(+). It functions in the pathway amine and polyamine biosynthesis; betaine biosynthesis via choline pathway; betaine aldehyde from choline (cytochrome c reductase route): step 1/1. Involved in the biosynthesis of the osmoprotectant glycine betaine. Catalyzes the oxidation of choline to betaine aldehyde and betaine aldehyde to glycine betaine at the same rate. This chain is Oxygen-dependent choline dehydrogenase, found in Paraburkholderia xenovorans (strain LB400).